The following is a 125-amino-acid chain: Succinate dehydrogenase assembly factor 3, mitochondrial (125 aa).

The transit peptide at methionine 1 to leucine 30 directs the protein to the mitochondrion.

This sequence belongs to the complex I LYR family. SDHAF3 subfamily. As to quaternary structure, interacts with Sdhb within an Sdha-Sdhb subcomplex.

It is found in the mitochondrion matrix. Its function is as follows. Plays an essential role in the assembly of succinate dehydrogenase (SDH), an enzyme complex (also referred to as respiratory complex II) that is a component of both the tricarboxylic acid (TCA) cycle and the mitochondrial electron transport chain, and which couples the oxidation of succinate to fumarate with the reduction of ubiquinone (coenzyme Q) to ubiquinol. Promotes maturation of the iron-sulfur protein subunit Sdhb of the SDH catalytic dimer, protecting it from the deleterious effects of oxidants. May act together with SDHAF1. The chain is Succinate dehydrogenase assembly factor 3, mitochondrial from Rattus norvegicus (Rat).